Here is a 164-residue protein sequence, read N- to C-terminus: Ribosome-binding factor A (164 aa).

The interval 123–164 is disordered; that stretch reads ARDLGVPPSGEDDGDDEADDEDDDGGEEGPGAAAPPPADEGR. A compositionally biased stretch (acidic residues) spans 132-149; that stretch reads GEDDGDDEADDEDDDGGE. A compositionally biased stretch (pro residues) spans 155-164; the sequence is AAPPPADEGR.

This sequence belongs to the RbfA family. Monomer. Binds 30S ribosomal subunits, but not 50S ribosomal subunits or 70S ribosomes.

It localises to the cytoplasm. Functionally, one of several proteins that assist in the late maturation steps of the functional core of the 30S ribosomal subunit. Associates with free 30S ribosomal subunits (but not with 30S subunits that are part of 70S ribosomes or polysomes). Required for efficient processing of 16S rRNA. May interact with the 5'-terminal helix region of 16S rRNA. This is Ribosome-binding factor A from Rhodospirillum rubrum (strain ATCC 11170 / ATH 1.1.1 / DSM 467 / LMG 4362 / NCIMB 8255 / S1).